The chain runs to 264 residues: 4-oxalocrotonate decarboxylase (264 aa).

Belongs to the hydratase/decarboxylase family.

It catalyses the reaction (3E)-2-oxohex-3-enedioate + H(+) = 2-oxopent-4-enoate + CO2. The protein operates within xenobiotic degradation; toluene degradation. The chain is 4-oxalocrotonate decarboxylase (xylI) from Pseudomonas putida (Arthrobacter siderocapsulatus).